The following is a 349-amino-acid chain: Protein RAE1 (349 aa).

The interval 1–21 (MATFGAPATANSNPNKSYEVT) is disordered. Ala-2 is subject to N-acetylalanine. The segment covering 9–21 (TANSNPNKSYEVT) has biased composition (polar residues). WD repeat units follow at residues 23 to 62 (SPAD…ASLA), 70 to 109 (SHDQ…QPVT), 112 to 151 (MHEG…PVHT), 153 to 190 (QLPD…TEFK), and 244 to 283 (NDIY…RLKA). Positions 128–144 (LLATGSWDKTLKYWDTR) match the DWD box motif.

Belongs to the WD repeat rae1 family. Part of the nuclear pore complex (NPC). The NPC has an eight-fold symmetrical structure comprising a central transport channel and two rings, the cytoplasmic and nuclear rings, to which eight filaments are attached. The cytoplasmic filaments have loose ends, while the nuclear filaments are joined in a distal ring, forming a nuclear basket. NPCs are highly dynamic in configuration and composition, and can be devided in 3 subcomplexes, the NUP62 subcomplex, the NUP107-160 subcomplex and the NUP93 subcomplex, containing approximately 30 different nucleoporin proteins. Interacts with DDB1A.

The protein resides in the nucleus envelope. The protein localises to the nucleus. It localises to the nuclear pore complex. This is Protein RAE1 from Arabidopsis thaliana (Mouse-ear cress).